Consider the following 319-residue polypeptide: Coproporphyrin III ferrochelatase (319 aa).

Fe(2+)-binding residues include His193 and Glu274.

Belongs to the ferrochelatase family.

Its subcellular location is the cytoplasm. The catalysed reaction is Fe-coproporphyrin III + 2 H(+) = coproporphyrin III + Fe(2+). It functions in the pathway porphyrin-containing compound metabolism; protoheme biosynthesis. Functionally, involved in coproporphyrin-dependent heme b biosynthesis. Catalyzes the insertion of ferrous iron into coproporphyrin III to form Fe-coproporphyrin III. The protein is Coproporphyrin III ferrochelatase of Streptococcus mutans serotype c (strain ATCC 700610 / UA159).